Here is a 1519-residue protein sequence, read N- to C-terminus: Rho guanine nucleotide exchange factor 40 (1519 aa).

Disordered regions lie at residues 194–237 (VGHQ…PVEG) and 253–503 (RGSP…LETV). A compositionally biased stretch (pro residues) spans 200-218 (TLPPELPSGPPGLPSPPLP). Position 262 is a phosphoserine (Ser-262). Basic residues predominate over residues 280–290 (KGRHRRHRAWM). Low complexity predominate over residues 314 to 341 (ASPESPPGAEAVPEAAVLEVSEPPAEAV). Gly residues predominate over residues 355 to 367 (LRGGGGGGQGAEG). Thr-371 carries the phosphothreonine modification. Basic residues predominate over residues 374–386 (RTGKGNRRKKRAA). Ser-419 is modified (phosphoserine). The span at 421-457 (SEHKLPECHLVKEEYEGSGKPESEPKELKTAGEKEPQ) shows a compositional bias: basic and acidic residues. The stretch at 828-871 (SAEVQERLAQAREALALEENATSQKVLDIFEQRLEQVESGLHRA) forms a coiled coil. A phosphoserine mark is found at Ser-931 and Ser-961. Residues 934–961 (ALREWGRCQARCQELERRIQQHVGEEAS) are a coiled coil. The tract at residues 955–1031 (HVGEEASPRG…ELAPEAEGRP (77 aa)) is disordered. Over residues 980 to 996 (WGPRSPSPSLSSLLLPS) the composition is skewed to low complexity. A Phosphoserine modification is found at Ser-1082. The DH domain occupies 1085 to 1253 (AQQRLVSELI…REQEARGRDL (169 aa)). The 108-residue stretch at 1265–1372 (DLKEQGQLLH…WTSSIAQLLW (108 aa)) folds into the PH domain. Ser-1433, Ser-1438, and Ser-1474 each carry phosphoserine. Residues 1466 to 1519 (TLDSSGDVSPGPRNSPSLQPPHPGSSTPTLASRGILGLSRQSHARALSDPTTPL) form a disordered region. Over residues 1467-1482 (LDSSGDVSPGPRNSPS) the composition is skewed to polar residues. Thr-1492 carries the phosphothreonine modification.

As to expression, expressed at higher level in the central nervous system and skeletal muscle and greater abundance in fetal than adult brain (at protein level).

It localises to the cytoplasm. In terms of biological role, may act as a guanine nucleotide exchange factor (GEF). The sequence is that of Rho guanine nucleotide exchange factor 40 (ARHGEF40) from Homo sapiens (Human).